The following is a 350-amino-acid chain: Protein FAM118B (350 aa).

A2 is subject to N-acetylalanine. Phosphoserine is present on S9. Residues 330–350 (AREGQLNGSSAAHGEIRGCST) form a disordered region.

This sequence belongs to the FAM118 family.

It localises to the nucleus. It is found in the cajal body. May play a role in Cajal bodies formation. The polypeptide is Protein FAM118B (Fam118b) (Rattus norvegicus (Rat)).